Here is a 314-residue protein sequence, read N- to C-terminus: Ribosomal RNA small subunit methyltransferase H (314 aa).

Residues 33 to 35 (GGH), aspartate 52, phenylalanine 84, aspartate 105, and glutamine 112 each bind S-adenosyl-L-methionine.

It belongs to the methyltransferase superfamily. RsmH family.

The protein localises to the cytoplasm. It catalyses the reaction cytidine(1402) in 16S rRNA + S-adenosyl-L-methionine = N(4)-methylcytidine(1402) in 16S rRNA + S-adenosyl-L-homocysteine + H(+). Specifically methylates the N4 position of cytidine in position 1402 (C1402) of 16S rRNA. The protein is Ribosomal RNA small subunit methyltransferase H of Lactobacillus delbrueckii subsp. bulgaricus (strain ATCC 11842 / DSM 20081 / BCRC 10696 / JCM 1002 / NBRC 13953 / NCIMB 11778 / NCTC 12712 / WDCM 00102 / Lb 14).